Reading from the N-terminus, the 226-residue chain is ATP synthase F(0) complex subunit a (226 aa).

6 helical membrane-spanning segments follow: residues 6–26 (FAPF…IMIF), 68–88 (WTLM…LGLL), 97–117 (QLSM…LMGF), 138–158 (IPML…ALAV), 164–184 (ITAG…LSSI), and 193–213 (FTIL…QAYV).

This sequence belongs to the ATPase A chain family. Component of the ATP synthase complex composed at least of ATP5F1A/subunit alpha, ATP5F1B/subunit beta, ATP5MC1/subunit c (homooctomer), MT-ATP6/subunit a, MT-ATP8/subunit 8, ATP5ME/subunit e, ATP5MF/subunit f, ATP5MG/subunit g, ATP5MK/subunit k, ATP5MJ/subunit j, ATP5F1C/subunit gamma, ATP5F1D/subunit delta, ATP5F1E/subunit epsilon, ATP5PF/subunit F6, ATP5PB/subunit b, ATP5PD/subunit d, ATP5PO/subunit OSCP. ATP synthase complex consists of a soluble F(1) head domain (subunits alpha(3) and beta(3)) - the catalytic core - and a membrane F(0) domain - the membrane proton channel (subunits c, a, 8, e, f, g, k and j). These two domains are linked by a central stalk (subunits gamma, delta, and epsilon) rotating inside the F1 region and a stationary peripheral stalk (subunits F6, b, d, and OSCP). Interacts with DNAJC30; interaction is direct.

It localises to the mitochondrion inner membrane. The enzyme catalyses H(+)(in) = H(+)(out). Subunit a, of the mitochondrial membrane ATP synthase complex (F(1)F(0) ATP synthase or Complex V) that produces ATP from ADP in the presence of a proton gradient across the membrane which is generated by electron transport complexes of the respiratory chain. ATP synthase complex consist of a soluble F(1) head domain - the catalytic core - and a membrane F(1) domain - the membrane proton channel. These two domains are linked by a central stalk rotating inside the F(1) region and a stationary peripheral stalk. During catalysis, ATP synthesis in the catalytic domain of F(1) is coupled via a rotary mechanism of the central stalk subunits to proton translocation. With the subunit c (ATP5MC1), forms the proton-conducting channel in the F(0) domain, that contains two crucial half-channels (inlet and outlet) that facilitate proton movement from the mitochondrial intermembrane space (IMS) into the matrix. Protons are taken up via the inlet half-channel and released through the outlet half-channel, following a Grotthuss mechanism. The protein is ATP synthase F(0) complex subunit a of Ornithorhynchus anatinus (Duckbill platypus).